The sequence spans 182 residues: MNRSEKPQLRATTVLGVIRNGKAALGSDGQMTLGNTVIKHSTKKIRRIQHANLITGFAGATADAVTLLDRFDEKLQAFGGQLERSAVELARDWRTDKYLRRLEAMLAVVSADKALIISGTGDVIEPEDGIVAIGSGSMYALSAARALIRYTDLSAREIVTESLKIAADICIYTNDHIVVEEV.

Residue threonine 12 is part of the active site. Alanine 167, cysteine 170, and threonine 173 together coordinate Na(+).

This sequence belongs to the peptidase T1B family. HslV subfamily. A double ring-shaped homohexamer of HslV is capped on each side by a ring-shaped HslU homohexamer. The assembly of the HslU/HslV complex is dependent on binding of ATP.

The protein localises to the cytoplasm. It catalyses the reaction ATP-dependent cleavage of peptide bonds with broad specificity.. Allosterically activated by HslU binding. In terms of biological role, protease subunit of a proteasome-like degradation complex believed to be a general protein degrading machinery. In Prosthecochloris aestuarii (strain DSM 271 / SK 413), this protein is ATP-dependent protease subunit HslV.